We begin with the raw amino-acid sequence, 144 residues long: Large ribosomal subunit protein uL15 (144 aa).

Positions Met1–Gln52 are disordered. Residues Glu15–Gly26 are compositionally biased toward basic residues.

Belongs to the universal ribosomal protein uL15 family. In terms of assembly, part of the 50S ribosomal subunit.

Functionally, binds to the 23S rRNA. This is Large ribosomal subunit protein uL15 from Mycoplasmopsis agalactiae (strain NCTC 10123 / CIP 59.7 / PG2) (Mycoplasma agalactiae).